A 424-amino-acid chain; its full sequence is MHDLSHFRNNFEKLAERLATRGGAINLDGFRDLDLKRRSAISQAEQLKARKNQESLEIGKLKREGADTAERQKEVRAIADQIVALDEQVKTVDEEFQKLLSGIPNIPHESVPVGKSADDNVEVRRSGEPAKFDFEPKAHWDLGPELGILDFERAVKITGARFALYWGAGARLERALVNFFLDVHTQQHGYTEVLPPFMVNSASLYGTGQLPKFAEDLFKIENSDFWLIPTAEVPVTNIYRDETLEGEQLPVKLCAYTPCFRSEAGSYGRDVRGIIRQHQFQKVELVKFTRPEQSYDELDKLTADAEDILVRLGLPFRTVVLCTGDMGPSSAKTYDIEVWLPGQNNYKEISSCSNFEAFQARRAGIRYRTGKKSEFAHTINGSGLAVGRTWVAIIENYQQMDGSVIIPEALRPYMNAEIIRPERP.

230 to 232 (TAE) is an L-serine binding site. 261–263 (RSE) lines the ATP pocket. E284 lines the L-serine pocket. 348 to 351 (EISS) is an ATP binding site. S382 is a binding site for L-serine.

It belongs to the class-II aminoacyl-tRNA synthetase family. Type-1 seryl-tRNA synthetase subfamily. As to quaternary structure, homodimer. The tRNA molecule binds across the dimer.

It localises to the cytoplasm. The enzyme catalyses tRNA(Ser) + L-serine + ATP = L-seryl-tRNA(Ser) + AMP + diphosphate + H(+). The catalysed reaction is tRNA(Sec) + L-serine + ATP = L-seryl-tRNA(Sec) + AMP + diphosphate + H(+). The protein operates within aminoacyl-tRNA biosynthesis; selenocysteinyl-tRNA(Sec) biosynthesis; L-seryl-tRNA(Sec) from L-serine and tRNA(Sec): step 1/1. Catalyzes the attachment of serine to tRNA(Ser). Is also able to aminoacylate tRNA(Sec) with serine, to form the misacylated tRNA L-seryl-tRNA(Sec), which will be further converted into selenocysteinyl-tRNA(Sec). The sequence is that of Serine--tRNA ligase from Solibacter usitatus (strain Ellin6076).